The following is a 134-amino-acid chain: Putative thioredoxin 2 (134 aa).

A Thioredoxin domain is found at 3–106 (STVELTKENF…LTDVIGQARK (104 aa)). Cysteines 31 and 34 form a disulfide. The segment at 115–134 (AVAEQQAQAGQNGQEGQEGQ) is disordered. Residues 117-134 (AEQQAQAGQNGQEGQEGQ) show a composition bias toward low complexity.

Belongs to the thioredoxin family.

The protein resides in the cytoplasm. Component of the thioredoxin-thioredoxin reductase system. Participates in various redox reactions through the reversible oxidation of its active center dithiol to a disulfide and catalyzes dithiol-disulfide exchange reactions. The protein is Putative thioredoxin 2 (trxC) of Streptomyces coelicolor (strain ATCC BAA-471 / A3(2) / M145).